The chain runs to 150 residues: Depactin (150 aa).

One can recognise an ADF-H domain in the interval 3–148; sequence SGTALDENVK…SEEAIGDKIK (146 aa).

This sequence belongs to the actin-binding proteins ADF family.

Its function is as follows. Depactin interacts with actin at some of its 12 N-terminal residues and 20 C-terminal residues. Binds to actin monomers from filaments and in solution. This Asterias amurensis (Northern Pacific seastar) protein is Depactin.